Consider the following 258-residue polypeptide: Global transcriptional regulator CodY (258 aa).

Positions 1 to 156 are GAF domain; the sequence is MSSLLEKTRQ…SATIIGLEIL (156 aa). A DNA-binding region (H-T-H motif) is located at residues 204 to 223; sequence ASKIADKVGITRSVIVNALR.

This sequence belongs to the CodY family.

Its subcellular location is the cytoplasm. Its function is as follows. DNA-binding global transcriptional regulator which is involved in the adaptive response to starvation and acts by directly or indirectly controlling the expression of numerous genes in response to nutrient availability. During rapid exponential growth, CodY is highly active and represses genes whose products allow adaptation to nutrient depletion. This Clostridium tetani (strain Massachusetts / E88) protein is Global transcriptional regulator CodY.